Reading from the N-terminus, the 489-residue chain is Cytochrome P450-DIT2 (489 aa).

Cys435 contributes to the heme binding site.

This sequence belongs to the cytochrome P450 family. Requires heme as cofactor.

Its function is as follows. Involved in spore wall maturation. Thought to catalyze the oxidation of tyrosine residues in the formation of LL-dityrosine a precursor of the spore wall. The sequence is that of Cytochrome P450-DIT2 (DIT2) from Saccharomyces cerevisiae (strain ATCC 204508 / S288c) (Baker's yeast).